Here is a 320-residue protein sequence, read N- to C-terminus: Aspartate carbamoyltransferase catalytic subunit (320 aa).

Carbamoyl phosphate is bound by residues Arg-68 and Thr-69. Position 96 (Lys-96) interacts with L-aspartate. Arg-118, His-148, and Gln-151 together coordinate carbamoyl phosphate. Arg-181 and Arg-236 together coordinate L-aspartate. Carbamoyl phosphate is bound by residues Gly-277 and Pro-278.

The protein belongs to the aspartate/ornithine carbamoyltransferase superfamily. ATCase family. As to quaternary structure, heterododecamer (2C3:3R2) of six catalytic PyrB chains organized as two trimers (C3), and six regulatory PyrI chains organized as three dimers (R2).

The catalysed reaction is carbamoyl phosphate + L-aspartate = N-carbamoyl-L-aspartate + phosphate + H(+). It functions in the pathway pyrimidine metabolism; UMP biosynthesis via de novo pathway; (S)-dihydroorotate from bicarbonate: step 2/3. In terms of biological role, catalyzes the condensation of carbamoyl phosphate and aspartate to form carbamoyl aspartate and inorganic phosphate, the committed step in the de novo pyrimidine nucleotide biosynthesis pathway. The polypeptide is Aspartate carbamoyltransferase catalytic subunit (Delftia acidovorans (strain DSM 14801 / SPH-1)).